A 118-amino-acid polypeptide reads, in one-letter code: Large ribosomal subunit protein bL20c (118 aa).

Belongs to the bacterial ribosomal protein bL20 family.

The protein localises to the plastid. Binds directly to 23S ribosomal RNA and is necessary for the in vitro assembly process of the 50S ribosomal subunit. It is not involved in the protein synthesizing functions of that subunit. This is Large ribosomal subunit protein bL20c (rpl20) from Cuscuta reflexa (Southern Asian dodder).